The sequence spans 62 residues: Large ribosomal subunit protein bL28 (62 aa).

The disordered stretch occupies residues 1–28; the sequence is MARVCAITGRKARSGNSRSHAMNATKRK.

This sequence belongs to the bacterial ribosomal protein bL28 family.

The protein is Large ribosomal subunit protein bL28 of Bacillus cytotoxicus (strain DSM 22905 / CIP 110041 / 391-98 / NVH 391-98).